Reading from the N-terminus, the 181-residue chain is ATP synthase subunit b 2 (181 aa).

Positions Met1–Gly12 are enriched in low complexity. Residues Met1–Pro20 are disordered. The chain crosses the membrane as a helical span at residues Leu33–Pro53.

It belongs to the ATPase B chain family. As to quaternary structure, F-type ATPases have 2 components, F(1) - the catalytic core - and F(0) - the membrane proton channel. F(1) has five subunits: alpha(3), beta(3), gamma(1), delta(1), epsilon(1). F(0) has three main subunits: a(1), b(2) and c(10-14). The alpha and beta chains form an alternating ring which encloses part of the gamma chain. F(1) is attached to F(0) by a central stalk formed by the gamma and epsilon chains, while a peripheral stalk is formed by the delta and b chains.

It localises to the cell inner membrane. In terms of biological role, f(1)F(0) ATP synthase produces ATP from ADP in the presence of a proton or sodium gradient. F-type ATPases consist of two structural domains, F(1) containing the extramembraneous catalytic core and F(0) containing the membrane proton channel, linked together by a central stalk and a peripheral stalk. During catalysis, ATP synthesis in the catalytic domain of F(1) is coupled via a rotary mechanism of the central stalk subunits to proton translocation. Component of the F(0) channel, it forms part of the peripheral stalk, linking F(1) to F(0). The b'-subunit is a diverged and duplicated form of b found in plants and photosynthetic bacteria. This is ATP synthase subunit b 2 (atpF2) from Rhodopseudomonas palustris (strain BisA53).